A 347-amino-acid chain; its full sequence is S-adenosylmethionine:tRNA ribosyltransferase-isomerase (347 aa).

This sequence belongs to the QueA family. Monomer.

It localises to the cytoplasm. The enzyme catalyses 7-aminomethyl-7-carbaguanosine(34) in tRNA + S-adenosyl-L-methionine = epoxyqueuosine(34) in tRNA + adenine + L-methionine + 2 H(+). The protein operates within tRNA modification; tRNA-queuosine biosynthesis. In terms of biological role, transfers and isomerizes the ribose moiety from AdoMet to the 7-aminomethyl group of 7-deazaguanine (preQ1-tRNA) to give epoxyqueuosine (oQ-tRNA). This chain is S-adenosylmethionine:tRNA ribosyltransferase-isomerase, found in Xylella fastidiosa (strain M23).